A 321-amino-acid polypeptide reads, in one-letter code: uncharacterized protein (321 aa).

Over 1-5 (MKQQA) the chain is Cytoplasmic. Residues 6-26 (GIGILLALTTAICWGALPIAM) form a helical membrane-spanning segment. The EamA 1 domain maps to 17-144 (ICWGALPIAM…LLSGLVMFFN (128 aa)). The Periplasmic segment spans residues 27-35 (KQVLEVMEP). The helical transmembrane segment at 36-56 (PTIVFYRFLMASIGLGAILAV) threads the bilayer. Topologically, residues 57 to 70 (KKRLPPLRVFRKPR) are cytoplasmic. Residues 71–91 (WLILLAVATAGLFGNFILFSS) form a helical membrane-spanning segment. The Periplasmic segment spans residues 92–99 (SLQYLSPT). Residues 100-120 (ASQVIGQLSPVGMMVASVFIL) traverse the membrane as a helical segment. Residues 121 to 130 (KEKMRSTQVV) are Cytoplasmic-facing. Residues 131-151 (GALMLLSGLVMFFNTSLVEIF) form a helical membrane-spanning segment. Residues 152–156 (TKLTD) are Periplasmic-facing. A helical membrane pass occupies residues 157-177 (YTWGVIFGVGAATVWVSYGVA). In terms of domain architecture, EamA 2 spans 169-292 (TVWVSYGVAQ…GYLGAFVVVA (124 aa)). Residues 178–190 (QKVLLRRLASPQI) lie on the Cytoplasmic side of the membrane. A helical transmembrane segment spans residues 191-211 (LFLLYTLCTIALFPLAKPGVI). Over 212-216 (AQLSH) the chain is Periplasmic. A helical transmembrane segment spans residues 217 to 237 (WQLACLIFCGLNTLVGYGALA). At 238–249 (EAMARWQAAQVS) the chain is on the cytoplasmic side. Residues 250–270 (AIITLTPLFTLFFSDLLSLAW) traverse the membrane as a helical segment. Residues 271–278 (PDFFARPM) lie on the Periplasmic side of the membrane. The helical transmembrane segment at 279-299 (LNLLGYLGAFVVVAGAMYSAI) threads the bilayer. Residues 300-321 (GHRIWGGLRKHTTVVSQPRAGE) lie on the Cytoplasmic side of the membrane.

It belongs to the EamA transporter family.

Its subcellular location is the cell inner membrane. This is an uncharacterized protein from Escherichia coli O157:H7.